The sequence spans 210 residues: Probable sporulation protein YtaF (210 aa).

The next 6 membrane-spanning stretches (helical) occupy residues 6–26, 36–56, 69–89, 129–149, 162–184, and 190–210; these read ILLL…TYGL, ILVI…IGSF, LGGL…FKPA, VING…AFGA, VMSI…AGHF, and WIDK…LWKL.

It is found in the cell membrane. In Bacillus subtilis (strain 168), this protein is Probable sporulation protein YtaF (ytaF).